Reading from the N-terminus, the 252-residue chain is 2-succinyl-6-hydroxy-2,4-cyclohexadiene-1-carboxylate synthase (252 aa).

Belongs to the AB hydrolase superfamily. MenH family. As to quaternary structure, monomer.

It catalyses the reaction 5-enolpyruvoyl-6-hydroxy-2-succinyl-cyclohex-3-ene-1-carboxylate = (1R,6R)-6-hydroxy-2-succinyl-cyclohexa-2,4-diene-1-carboxylate + pyruvate. The protein operates within quinol/quinone metabolism; 1,4-dihydroxy-2-naphthoate biosynthesis; 1,4-dihydroxy-2-naphthoate from chorismate: step 3/7. It functions in the pathway quinol/quinone metabolism; menaquinone biosynthesis. Functionally, catalyzes a proton abstraction reaction that results in 2,5-elimination of pyruvate from 2-succinyl-5-enolpyruvyl-6-hydroxy-3-cyclohexene-1-carboxylate (SEPHCHC) and the formation of 2-succinyl-6-hydroxy-2,4-cyclohexadiene-1-carboxylate (SHCHC). The sequence is that of 2-succinyl-6-hydroxy-2,4-cyclohexadiene-1-carboxylate synthase from Escherichia coli (strain SMS-3-5 / SECEC).